The sequence spans 574 residues: Putative dehydratase IlvD1 (574 aa).

[4Fe-4S] cluster contacts are provided by cysteine 124 and cysteine 197.

It belongs to the IlvD/Edd family. It depends on [4Fe-4S] cluster as a cofactor.

Involved in the degradation of galactose via the DeLey-Doudoroff pathway. The protein is Putative dehydratase IlvD1 (ilvD1) of Rhizobium meliloti (strain 1021) (Ensifer meliloti).